Here is a 130-residue protein sequence, read N- to C-terminus: MVMLDLLSNALTAIKNAEAMGKRQVVIWPVNKLIYYTLRVLQRYGYVGEIEYIDDGRGGKYVVQLLGKINDIGAIRPRFPVKYREIVEWEQKYLPARQIGILVISTSQGVMSHLEAKEKKIGGVLLAYVY.

The protein belongs to the universal ribosomal protein uS8 family. In terms of assembly, part of the 30S ribosomal subunit.

Functionally, one of the primary rRNA binding proteins, it binds directly to 16S rRNA central domain where it helps coordinate assembly of the platform of the 30S subunit. This chain is Small ribosomal subunit protein uS8, found in Pyrobaculum calidifontis (strain DSM 21063 / JCM 11548 / VA1).